The chain runs to 243 residues: 4-hydroxy-tetrahydrodipicolinate reductase (243 aa).

NAD(+) is bound by residues Gly9–Met14, Gly78–Ser80, and Ala104–Phe107. Residue His134 is the Proton donor/acceptor of the active site. His135 lines the (S)-2,3,4,5-tetrahydrodipicolinate pocket. Lys138 acts as the Proton donor in catalysis. (S)-2,3,4,5-tetrahydrodipicolinate is bound at residue Gly144–Thr145.

Belongs to the DapB family.

It is found in the cytoplasm. The catalysed reaction is (S)-2,3,4,5-tetrahydrodipicolinate + NAD(+) + H2O = (2S,4S)-4-hydroxy-2,3,4,5-tetrahydrodipicolinate + NADH + H(+). It catalyses the reaction (S)-2,3,4,5-tetrahydrodipicolinate + NADP(+) + H2O = (2S,4S)-4-hydroxy-2,3,4,5-tetrahydrodipicolinate + NADPH + H(+). The protein operates within amino-acid biosynthesis; L-lysine biosynthesis via DAP pathway; (S)-tetrahydrodipicolinate from L-aspartate: step 4/4. Catalyzes the conversion of 4-hydroxy-tetrahydrodipicolinate (HTPA) to tetrahydrodipicolinate. In Legionella pneumophila subsp. pneumophila (strain Philadelphia 1 / ATCC 33152 / DSM 7513), this protein is 4-hydroxy-tetrahydrodipicolinate reductase.